Here is a 325-residue protein sequence, read N- to C-terminus: Probable WRKY transcription factor 11 (325 aa).

The WRKY DNA-binding region spans 240 to 306 (KIADIPPDEY…YEGEHRHNQS (67 aa)).

It belongs to the WRKY group II-d family. In terms of tissue distribution, in young, mature and senescent leaves.

The protein resides in the nucleus. Functionally, transcription factor. Interacts specifically with the W box (5'-(T)TGAC[CT]-3'), a frequently occurring elicitor-responsive cis-acting element. Regulates rhizobacterium B.cereus AR156-induced systemic resistance (ISR) to P.syringae pv. tomato DC3000, probably by activating the jasmonic acid (JA)- signaling pathway. This Arabidopsis thaliana (Mouse-ear cress) protein is Probable WRKY transcription factor 11 (WRKY11).